Consider the following 709-residue polypeptide: Kelch domain-containing protein STK_09390 (709 aa).

A signal peptide spans 1-22; that stretch reads MKRNTLLALVLVILIFPTLSTA. 6 Kelch repeats span residues 49–94, 96–140, 141–192, 193–240, 242–288, and 290–340; these read KIFL…VCNN, LYVV…SYDY, KIYV…FNGS, ALFV…YYNG, MYLV…VQIG, and KLII…DTNA. 4 consecutive Fibronectin type-III domains span residues 315–405, 406–488, 489–566, and 568–643; these read PPPK…VPNP, PIIK…ASKA, NLTV…IYYI, and PASP…NDVR.

This is Kelch domain-containing protein STK_09390 from Sulfurisphaera tokodaii (strain DSM 16993 / JCM 10545 / NBRC 100140 / 7) (Sulfolobus tokodaii).